A 245-amino-acid polypeptide reads, in one-letter code: tRNA pseudouridine synthase A (245 aa).

D52 serves as the catalytic Nucleophile. Substrate is bound at residue Y111.

It belongs to the tRNA pseudouridine synthase TruA family. As to quaternary structure, homodimer.

It catalyses the reaction uridine(38/39/40) in tRNA = pseudouridine(38/39/40) in tRNA. Its function is as follows. Formation of pseudouridine at positions 38, 39 and 40 in the anticodon stem and loop of transfer RNAs. This chain is tRNA pseudouridine synthase A, found in Ehrlichia canis (strain Jake).